The chain runs to 55 residues: ATP synthase F(0) complex subunit 8 (55 aa).

Residues L4–I24 form a helical membrane-spanning segment. The segment at T34–H55 is disordered.

Belongs to the ATPase protein 8 family. As to quaternary structure, component of the ATP synthase complex composed at least of ATP5F1A/subunit alpha, ATP5F1B/subunit beta, ATP5MC1/subunit c (homooctomer), MT-ATP6/subunit a, MT-ATP8/subunit 8, ATP5ME/subunit e, ATP5MF/subunit f, ATP5MG/subunit g, ATP5MK/subunit k, ATP5MJ/subunit j, ATP5F1C/subunit gamma, ATP5F1D/subunit delta, ATP5F1E/subunit epsilon, ATP5PF/subunit F6, ATP5PB/subunit b, ATP5PD/subunit d, ATP5PO/subunit OSCP. ATP synthase complex consists of a soluble F(1) head domain (subunits alpha(3) and beta(3)) - the catalytic core - and a membrane F(0) domain - the membrane proton channel (subunits c, a, 8, e, f, g, k and j). These two domains are linked by a central stalk (subunits gamma, delta, and epsilon) rotating inside the F1 region and a stationary peripheral stalk (subunits F6, b, d, and OSCP).

The protein localises to the mitochondrion membrane. Subunit 8, of the mitochondrial membrane ATP synthase complex (F(1)F(0) ATP synthase or Complex V) that produces ATP from ADP in the presence of a proton gradient across the membrane which is generated by electron transport complexes of the respiratory chain. ATP synthase complex consist of a soluble F(1) head domain - the catalytic core - and a membrane F(1) domain - the membrane proton channel. These two domains are linked by a central stalk rotating inside the F(1) region and a stationary peripheral stalk. During catalysis, ATP synthesis in the catalytic domain of F(1) is coupled via a rotary mechanism of the central stalk subunits to proton translocation. In vivo, can only synthesize ATP although its ATP hydrolase activity can be activated artificially in vitro. Part of the complex F(0) domain. The sequence is that of ATP synthase F(0) complex subunit 8 from Oncorhynchus mykiss (Rainbow trout).